Consider the following 614-residue polypeptide: DNA mismatch repair protein MutL (614 aa).

It belongs to the DNA mismatch repair MutL/HexB family.

Functionally, this protein is involved in the repair of mismatches in DNA. It is required for dam-dependent methyl-directed DNA mismatch repair. May act as a 'molecular matchmaker', a protein that promotes the formation of a stable complex between two or more DNA-binding proteins in an ATP-dependent manner without itself being part of a final effector complex. This Chlorobium phaeovibrioides (strain DSM 265 / 1930) (Prosthecochloris vibrioformis (strain DSM 265)) protein is DNA mismatch repair protein MutL.